The primary structure comprises 375 residues: Protein RecA (375 aa).

ATP is bound at residue 88–95 (GPESSGKT).

This sequence belongs to the RecA family.

It localises to the cytoplasm. In terms of biological role, can catalyze the hydrolysis of ATP in the presence of single-stranded DNA, the ATP-dependent uptake of single-stranded DNA by duplex DNA, and the ATP-dependent hybridization of homologous single-stranded DNAs. It interacts with LexA causing its activation and leading to its autocatalytic cleavage. This chain is Protein RecA, found in Rhodopirellula baltica (strain DSM 10527 / NCIMB 13988 / SH1).